The following is a 320-amino-acid chain: Protoheme IX farnesyltransferase 1 (320 aa).

Transmembrane regions (helical) follow at residues 34–54, 58–78, 112–132, 135–155, 160–180, 189–209, 234–254, 255–275, and 299–319; these read GIII…FASA, LTGL…AFVM, AMIL…LYSL, LTAF…TVWV, VWST…GYCA, AVLL…AIGI, IKMM…PFSL, GTGH…GIWI, and LIYF…MFLI.

It belongs to the UbiA prenyltransferase family. Protoheme IX farnesyltransferase subfamily. Interacts with CtaA.

The protein resides in the cell membrane. It carries out the reaction heme b + (2E,6E)-farnesyl diphosphate + H2O = Fe(II)-heme o + diphosphate. The protein operates within porphyrin-containing compound metabolism; heme O biosynthesis; heme O from protoheme: step 1/1. Its function is as follows. Converts heme B (protoheme IX) to heme O by substitution of the vinyl group on carbon 2 of heme B porphyrin ring with a hydroxyethyl farnesyl side group. The chain is Protoheme IX farnesyltransferase 1 (ctaB1) from Bacillus subtilis (strain 168).